The chain runs to 435 residues: Methylenetetrahydrofolate--tRNA-(uracil-5-)-methyltransferase TrmFO (435 aa).

9 to 14 (GGGLAG) is a binding site for FAD.

The protein belongs to the MnmG family. TrmFO subfamily. FAD serves as cofactor.

It localises to the cytoplasm. It catalyses the reaction uridine(54) in tRNA + (6R)-5,10-methylene-5,6,7,8-tetrahydrofolate + NADH + H(+) = 5-methyluridine(54) in tRNA + (6S)-5,6,7,8-tetrahydrofolate + NAD(+). The catalysed reaction is uridine(54) in tRNA + (6R)-5,10-methylene-5,6,7,8-tetrahydrofolate + NADPH + H(+) = 5-methyluridine(54) in tRNA + (6S)-5,6,7,8-tetrahydrofolate + NADP(+). Functionally, catalyzes the folate-dependent formation of 5-methyl-uridine at position 54 (M-5-U54) in all tRNAs. This chain is Methylenetetrahydrofolate--tRNA-(uracil-5-)-methyltransferase TrmFO, found in Geobacter sp. (strain M21).